The following is a 504-amino-acid chain: Xylose import ATP-binding protein XylG (504 aa).

ABC transporter domains follow at residues 6–243 (LEMK…VGRE) and 260–504 (LKVD…TGGK). 38-45 (GENGAGKS) contacts ATP.

This sequence belongs to the ABC transporter superfamily. Xylose importer (TC 3.A.1.2.4) family. As to quaternary structure, the complex is composed of two ATP-binding proteins (XylG), two transmembrane proteins (XylH) and a solute-binding protein (XylF).

The protein localises to the cell membrane. The enzyme catalyses D-xylose(out) + ATP + H2O = D-xylose(in) + ADP + phosphate + H(+). Functionally, part of the ABC transporter complex XylFGH involved in xylose import. Responsible for energy coupling to the transport system. In Geobacillus kaustophilus (strain HTA426), this protein is Xylose import ATP-binding protein XylG.